Consider the following 273-residue polypeptide: Phosphate import ATP-binding protein PstB (273 aa).

The 242-residue stretch at 27-268 folds into the ABC transporter domain; it reads VTVRNLNFYY…PSDRRTQDYI (242 aa). Residue 59–66 coordinates ATP; sequence GPSGCGKS.

This sequence belongs to the ABC transporter superfamily. Phosphate importer (TC 3.A.1.7) family. In terms of assembly, the complex is composed of two ATP-binding proteins (PstB), two transmembrane proteins (PstC and PstA) and a solute-binding protein (PstS).

It localises to the cell inner membrane. The enzyme catalyses phosphate(out) + ATP + H2O = ADP + 2 phosphate(in) + H(+). Functionally, part of the ABC transporter complex PstSACB involved in phosphate import. Responsible for energy coupling to the transport system. In Bradyrhizobium diazoefficiens (strain JCM 10833 / BCRC 13528 / IAM 13628 / NBRC 14792 / USDA 110), this protein is Phosphate import ATP-binding protein PstB.